The sequence spans 206 residues: ATP synthase subunit b (206 aa).

Residues 14-34 (VMMPAAVCAAVIGLSALGFAA) traverse the membrane as a helical segment.

Belongs to the ATPase B chain family. F-type ATPases have 2 components, F(1) - the catalytic core - and F(0) - the membrane proton channel. F(1) has five subunits: alpha(3), beta(3), gamma(1), delta(1), epsilon(1). F(0) has three main subunits: a(1), b(2) and c(10-14). The alpha and beta chains form an alternating ring which encloses part of the gamma chain. F(1) is attached to F(0) by a central stalk formed by the gamma and epsilon chains, while a peripheral stalk is formed by the delta and b chains.

The protein localises to the cell inner membrane. In terms of biological role, f(1)F(0) ATP synthase produces ATP from ADP in the presence of a proton or sodium gradient. F-type ATPases consist of two structural domains, F(1) containing the extramembraneous catalytic core and F(0) containing the membrane proton channel, linked together by a central stalk and a peripheral stalk. During catalysis, ATP synthesis in the catalytic domain of F(1) is coupled via a rotary mechanism of the central stalk subunits to proton translocation. Its function is as follows. Component of the F(0) channel, it forms part of the peripheral stalk, linking F(1) to F(0). In Geobacter metallireducens (strain ATCC 53774 / DSM 7210 / GS-15), this protein is ATP synthase subunit b.